Reading from the N-terminus, the 174-residue chain is Guided entry of tail-anchored proteins factor 1 (174 aa).

Residues methionine 1–arginine 8 lie on the Lumenal side of the membrane. The helical transmembrane segment at tryptophan 9 to proline 29 threads the bilayer. Topologically, residues threonine 30–lysine 99 are cytoplasmic. A coiled-coil region spans residues leucine 39–threonine 94. The interval leucine 39–leucine 97 is interaction with GET3/TRC40. Residues isoleucine 100–isoleucine 120 traverse the membrane as a helical segment. The Lumenal portion of the chain corresponds to tryptophan 121–arginine 148. A helical transmembrane segment spans residues valine 149 to isoleucine 169. At leucine 170–serine 174 the chain is on the cytoplasmic side.

The protein belongs to the WRB/GET1 family. Component of the Golgi to ER traffic (GET) complex, which is composed of GET1, CAMLG/GET2 and GET3. Within the complex, GET1 and CAMLG form a heterotetramer which is stabilized by phosphatidylinositol binding and which binds to the GET3 homodimer. Interacts with CAMLG/GET2 (via C-terminus). GET3 shows a higher affinity for CAMLG than for GET1.

The protein localises to the endoplasmic reticulum membrane. In terms of biological role, required for the post-translational delivery of tail-anchored (TA) proteins to the endoplasmic reticulum. Together with CAMLG/GET2, acts as a membrane receptor for soluble GET3/TRC40, which recognizes and selectively binds the transmembrane domain of TA proteins in the cytosol. Required to ensure correct topology and ER insertion of CAMLG. The sequence is that of Guided entry of tail-anchored proteins factor 1 from Rattus norvegicus (Rat).